Here is a 240-residue protein sequence, read N- to C-terminus: Pyridoxine 5'-phosphate synthase (240 aa).

Residue Asn-7 coordinates 3-amino-2-oxopropyl phosphate. Residue 9–10 (DH) coordinates 1-deoxy-D-xylulose 5-phosphate. Arg-18 is a binding site for 3-amino-2-oxopropyl phosphate. Catalysis depends on His-43, which acts as the Proton acceptor. The 1-deoxy-D-xylulose 5-phosphate site is built by Arg-45 and His-50. The active-site Proton acceptor is the Glu-70. Residue Thr-100 participates in 1-deoxy-D-xylulose 5-phosphate binding. Residue His-191 is the Proton donor of the active site. 3-amino-2-oxopropyl phosphate is bound by residues Gly-192 and 213–214 (GH).

Belongs to the PNP synthase family. Homooctamer; tetramer of dimers.

It localises to the cytoplasm. The catalysed reaction is 3-amino-2-oxopropyl phosphate + 1-deoxy-D-xylulose 5-phosphate = pyridoxine 5'-phosphate + phosphate + 2 H2O + H(+). Its pathway is cofactor biosynthesis; pyridoxine 5'-phosphate biosynthesis; pyridoxine 5'-phosphate from D-erythrose 4-phosphate: step 5/5. Its function is as follows. Catalyzes the complicated ring closure reaction between the two acyclic compounds 1-deoxy-D-xylulose-5-phosphate (DXP) and 3-amino-2-oxopropyl phosphate (1-amino-acetone-3-phosphate or AAP) to form pyridoxine 5'-phosphate (PNP) and inorganic phosphate. The protein is Pyridoxine 5'-phosphate synthase of Cyanothece sp. (strain PCC 7425 / ATCC 29141).